Consider the following 322-residue polypeptide: uncharacterized protein (322 aa).

Basic residues-rich tracts occupy residues 1-16 (MPGNSRRRGAVRKSGT) and 43-61 (LRPHHPAAKRARAQPRRPV). Residues 1 to 69 (MPGNSRRRGA…PVKRADETET (69 aa)) form a disordered region. 3 residues coordinate S-adenosyl-L-methionine: glycine 261, isoleucine 281, and leucine 290.

Belongs to the class IV-like SAM-binding methyltransferase superfamily. RNA methyltransferase TrmH family.

This is an uncharacterized protein from Mycobacterium bovis (strain BCG / Pasteur 1173P2).